Reading from the N-terminus, the 288-residue chain is Elongation factor Ts (288 aa).

Residues 82-85 form an involved in Mg(2+) ion dislocation from EF-Tu region; the sequence is TDFV.

It belongs to the EF-Ts family.

The protein localises to the cytoplasm. Its function is as follows. Associates with the EF-Tu.GDP complex and induces the exchange of GDP to GTP. It remains bound to the aminoacyl-tRNA.EF-Tu.GTP complex up to the GTP hydrolysis stage on the ribosome. The chain is Elongation factor Ts from Chlorobium phaeovibrioides (strain DSM 265 / 1930) (Prosthecochloris vibrioformis (strain DSM 265)).